Here is a 115-residue protein sequence, read N- to C-terminus: Large ribosomal subunit protein bL20 (115 aa).

The protein belongs to the bacterial ribosomal protein bL20 family.

Functionally, binds directly to 23S ribosomal RNA and is necessary for the in vitro assembly process of the 50S ribosomal subunit. It is not involved in the protein synthesizing functions of that subunit. This is Large ribosomal subunit protein bL20 from Prochlorococcus marinus (strain AS9601).